The chain runs to 156 residues: Small ribosomal subunit protein uS7 (156 aa).

This sequence belongs to the universal ribosomal protein uS7 family. As to quaternary structure, part of the 30S ribosomal subunit. Contacts proteins S9 and S11.

One of the primary rRNA binding proteins, it binds directly to 16S rRNA where it nucleates assembly of the head domain of the 30S subunit. Is located at the subunit interface close to the decoding center, probably blocks exit of the E-site tRNA. The sequence is that of Small ribosomal subunit protein uS7 from Streptococcus pyogenes serotype M12 (strain MGAS2096).